Reading from the N-terminus, the 574-residue chain is Proline--tRNA ligase (574 aa).

It belongs to the class-II aminoacyl-tRNA synthetase family. ProS type 1 subfamily. In terms of assembly, homodimer.

The protein resides in the cytoplasm. The catalysed reaction is tRNA(Pro) + L-proline + ATP = L-prolyl-tRNA(Pro) + AMP + diphosphate. Its function is as follows. Catalyzes the attachment of proline to tRNA(Pro) in a two-step reaction: proline is first activated by ATP to form Pro-AMP and then transferred to the acceptor end of tRNA(Pro). As ProRS can inadvertently accommodate and process non-cognate amino acids such as alanine and cysteine, to avoid such errors it has two additional distinct editing activities against alanine. One activity is designated as 'pretransfer' editing and involves the tRNA(Pro)-independent hydrolysis of activated Ala-AMP. The other activity is designated 'posttransfer' editing and involves deacylation of mischarged Ala-tRNA(Pro). The misacylated Cys-tRNA(Pro) is not edited by ProRS. The protein is Proline--tRNA ligase of Fervidobacterium nodosum (strain ATCC 35602 / DSM 5306 / Rt17-B1).